Here is a 192-residue protein sequence, read N- to C-terminus: MDGSGEQPRGGGPTSSEQIMKTGALLLQGFIQDRAGRMGGETPELGLEQVPQDASTKKLSECLKRIGDELDSNMELQRMIAAVDTDSPREVFFRVAAEMFSDGNFNWGRVVALFYFASKLVLKALCTKVPELIRTIMGWTLDFLRERLLGWIQDQGGWDGLLSYFGTPTWQTVTIFVAGVLTASLTIWKKMG.

Met-1 carries the post-translational modification N-acetylmethionine. A BH3 motif is present at residues 59 to 73 (LSECLKRIGDELDSN). The short motif at 98 to 118 (EMFSDGNFNWGRVVALFYFAS) is the BH1 element. Lys-128 is covalently cross-linked (Glycyl lysine isopeptide (Lys-Gly) (interchain with G-Cter in ubiquitin)). The BH2 motif lies at 150–165 (GWIQDQGGWDGLLSYF). Residues 172–192 (TVTIFVAGVLTASLTIWKKMG) traverse the membrane as a helical segment. A Glycyl lysine isopeptide (Lys-Gly) (interchain with G-Cter in ubiquitin) cross-link involves residue Lys-190.

The protein belongs to the Bcl-2 family. In terms of assembly, homodimer. Forms higher oligomers under stress conditions. Forms heterooligomers with BAK. Interacts with BCL2L11. Interaction with BCL2L11 promotes BAX oligomerization and association with mitochondrial membranes, with subsequent release of cytochrome c. Forms heterodimers with BCL2, BCL2L1 isoform Bcl-X(L), BCL2L2, MCL1 and A1. Interacts with SH3GLB1. Interacts with SFN and YWHAZ; the interaction occurs in the cytoplasm. Under stress conditions, JNK-mediated phosphorylation of SFN and YWHAZ, releases BAX to mitochondria. Interacts with RNF144B, which regulates the ubiquitin-dependent stability of BAX. Interacts with CLU under stress conditions that cause a conformation change leading to BAX oligomerization and association with mitochondria. Does not interact with CLU in unstressed cells. Interacts with FAIM2/LFG2. Interacts with RTL10/BOP. Interacts (via a C-terminal 33 residues) with NOL3 (via CARD domain); inhibits BAX activation and translocation and consequently cytochrome c release from mitochondria. Interacts with GIMAP3/IAN4 and GIMAP5/IAN5; this interaction is increased, when cells initiate apoptosis upon IL2 withdrawal. Interacts with IRF3; the interaction is direct, increases upon Sendai virus infection and mediates the formation of the apoptosis complex TOMM70:HSP90AA1:IRF3:BAX. Interacts with MOAP1, facilitating BAX-dependent mitochondrial outer membrane permeabilization and apoptosis. Interacts with BCL2L10/BCL-B. Interacts with non-acetylated XRCC6/Ku70; this interaction leads to BAX sequestration in the cytosol, away from the mitochondria, preventing BAX-mediated apoptosis. Post-translationally, ubiquitinated in the absence of XRCC6/Ku70. Ubiquitinated on Lys-128 and Lys-190. 'Lys-63'-linked polyubiquitin chains on Lys-128 are removed by USP12.

The protein resides in the mitochondrion outer membrane. Its subcellular location is the cytoplasm. The protein localises to the nucleus. In terms of biological role, plays a role in the mitochondrial apoptotic process. Under normal conditions, BAX is largely cytosolic via constant retrotranslocation from mitochondria to the cytosol mediated by BCL2L1/Bcl-xL, which avoids accumulation of toxic BAX levels at the mitochondrial outer membrane (MOM). Under stress conditions, undergoes a conformation change that causes translocation to the mitochondrion membrane, leading to the release of cytochrome c that then triggers apoptosis. Promotes activation of CASP3, and thereby apoptosis. This Bos taurus (Bovine) protein is Apoptosis regulator BAX (BAX).